The primary structure comprises 204 residues: Tumor protein D53 (204 aa).

The disordered stretch occupies residues 1–20 (MEAQAQGLLETEPLQGTDED). The stretch at 22–73 (VASADFSSMLSEEEKEELKAELVQLEDEITTLRQVLSAKERHLVEIKQKLGM) forms a coiled coil. Ser-29, Ser-86, Ser-122, and Ser-131 each carry phosphoserine. Arg-133 carries the post-translational modification Omega-N-methylarginine. Thr-146 carries the post-translational modification Phosphothreonine. 2 positions are modified to phosphoserine: Ser-149 and Ser-174.

The protein belongs to the TPD52 family. In terms of assembly, forms a homodimer or heterodimer with other members of the family.

This Homo sapiens (Human) protein is Tumor protein D53 (TPD52L1).